We begin with the raw amino-acid sequence, 523 residues long: GMP synthase [glutamine-hydrolyzing] (523 aa).

In terms of domain architecture, Glutamine amidotransferase type-1 spans 8-205 (KILILDFGSQ…VVNICGCATN (198 aa)). Cys-85 (nucleophile) is an active-site residue. Residues His-179 and Glu-181 contribute to the active site. The region spanning 206–398 (WTPENIIEDA…LGLPAEMLNR (193 aa)) is the GMPS ATP-PPase domain. 233 to 239 (SGGVDSS) serves as a coordination point for ATP.

As to quaternary structure, homodimer.

The catalysed reaction is XMP + L-glutamine + ATP + H2O = GMP + L-glutamate + AMP + diphosphate + 2 H(+). It functions in the pathway purine metabolism; GMP biosynthesis; GMP from XMP (L-Gln route): step 1/1. Its function is as follows. Catalyzes the synthesis of GMP from XMP. This is GMP synthase [glutamine-hydrolyzing] from Actinobacillus succinogenes (strain ATCC 55618 / DSM 22257 / CCUG 43843 / 130Z).